The chain runs to 263 residues: Killer cell lectin-like receptor 4 (263 aa).

Topologically, residues 1 to 44 (MTEQEDTFSAVRFHKSSGLQNEMRLKETRKPEKARLRVCSVPWQ) are cytoplasmic. Residues 45 to 65 (LIVIALGILISLRLVTVAVLM) traverse the membrane as a helical; Signal-anchor for type II membrane protein segment. Residues 66–263 (TNIFQYGQQK…CGKRLDKFPH (198 aa)) lie on the Extracellular side of the membrane. N-linked (GlcNAc...) asparagine glycans are attached at residues Asn-87 and Asn-104. The region spanning 139–258 (GVKVYWFCYG…SFICICGKRL (120 aa)) is the C-type lectin domain. Cystine bridges form between Cys-146–Cys-151, Cys-164–Cys-252, Cys-168–Cys-254, and Cys-233–Cys-246. 2 N-linked (GlcNAc...) asparagine glycosylation sites follow: Asn-170 and Asn-222.

As to quaternary structure, homodimer; disulfide-linked. Interacts with the adapter protein TYROBP/DAP12; the interaction leads to natural killer cell activation.

The protein resides in the cell membrane. In terms of biological role, receptor on natural killer (NK) cells for class I MHC. The polypeptide is Killer cell lectin-like receptor 4 (Klra4) (Mus musculus (Mouse)).